A 491-amino-acid chain; its full sequence is FAD-dependent monooxygenase idtM (491 aa).

The FAD site is built by Glu34, Gly48, Arg107, Asp307, and Ala320. The chain crosses the membrane as a helical span at residues 448 to 468; sequence ILSLVYVVAGLAMMYMSIYLV.

This sequence belongs to the paxM FAD-dependent monooxygenase family. It depends on FAD as a cofactor.

The protein localises to the membrane. It participates in secondary metabolite biosynthesis. FAD-dependent monooxygenase; part of the gene cluster that mediates the biosynthesis of paspalitrems, indole-diterpene (IDT) mycotoxins that are potent tremorgens in mammals. The geranylgeranyl diphosphate (GGPP) synthase idtG is proposed to catalyze the first step in IDT biosynthesis via catalysis of a series of iterative condensations of isopentenyl diphosphate (IPP) with dimethylallyl diphosphate (DMAPP), geranyl diphosphate (GPP), and farnesyl diphosphate (FPP), to form GGPP. Condensation of indole-3-glycerol phosphate with GGPP by the prenyltransferase idtC then forms 3-geranylgeranylindole (3-GGI). Epoxidation of the two terminal alkenes of the geranylgeranyl moiety by the FAD-dependent monooxygenase idtM, and cyclization by the terpene cyclase idtB then leads to the production of paspaline. The cytochrome P450 monooxygenase idtP then catalyzes oxidative elimination of the pendant methyl group at C-12 of paspaline and generates the C-10 ketone to yield 13-desoxypaxilline. The cytochrome P450 monooxygenase idtQ may catalyze the C-13 oxidation of 13-desoxypaxilline to afford paxilline. Considering that both paspalicine and paxilline were detected in C.paspali, idtQ also catalyzes the formation of paspalinine from 13-desoxypaxilline via paspalicine as an intermediate. Finally, the alpha-prenyltransferase idtF prenylates paspalinine at the C-20 or the C-21 positions to yield paspalitrems A and C, respectively. The hydroxylation of paspalitrem A at C-32 by a still unknown oxidase affords paspalitrem B. The polypeptide is FAD-dependent monooxygenase idtM (Claviceps paspali (Rye ergot fungus)).